The sequence spans 300 residues: Acetylglutamate kinase (300 aa).

Substrate contacts are provided by residues 73–74, Arg95, and Asn197; that span reads GG.

The protein belongs to the acetylglutamate kinase family. ArgB subfamily.

Its subcellular location is the cytoplasm. The enzyme catalyses N-acetyl-L-glutamate + ATP = N-acetyl-L-glutamyl 5-phosphate + ADP. It functions in the pathway amino-acid biosynthesis; L-arginine biosynthesis; N(2)-acetyl-L-ornithine from L-glutamate: step 2/4. Catalyzes the ATP-dependent phosphorylation of N-acetyl-L-glutamate. This is Acetylglutamate kinase from Polynucleobacter necessarius subsp. necessarius (strain STIR1).